The following is a 1604-amino-acid chain: Ubiquitin carboxyl-terminal hydrolase 32 (1604 aa).

3 EF-hand domains span residues Lys-91–Lys-126, Ile-228–Gly-263, and Pro-264–Val-299. Positions 241, 243, 245, 247, 252, 277, 279, 281, and 288 each coordinate Ca(2+). One can recognise a DUSP domain in the interval Ala-369–Ile-585. In terms of domain architecture, USP spans Thr-734–Gln-1567. The active-site Nucleophile is the Cys-743. Tyr-1173 bears the Phosphotyrosine mark. Residue Ser-1350 is modified to Phosphoserine. Residues Glu-1353 to Glu-1432 are disordered. Residues Lys-1360–Thr-1370 are compositionally biased toward polar residues. Residues Ser-1371 to Pro-1399 show a composition bias toward low complexity. Residues Ser-1372 and Ser-1376 each carry the phosphoserine modification. The span at Gly-1415 to Lys-1424 shows a compositional bias: polar residues. Ser-1454 is subject to Phosphoserine. The interval Ser-1484 to Thr-1504 is disordered. Residues His-1491–Thr-1504 are compositionally biased toward basic and acidic residues. His-1526 functions as the Proton acceptor in the catalytic mechanism. Ser-1588 carries the post-translational modification Phosphoserine. Cys-1601 is modified (cysteine methyl ester). Residue Cys-1601 is the site of S-farnesyl cysteine attachment. Residues Val-1602–Gln-1604 constitute a propeptide, removed in mature form.

Belongs to the peptidase C19 family.

The protein resides in the golgi apparatus membrane. The enzyme catalyses Thiol-dependent hydrolysis of ester, thioester, amide, peptide and isopeptide bonds formed by the C-terminal Gly of ubiquitin (a 76-residue protein attached to proteins as an intracellular targeting signal).. Its function is as follows. Deubiquitinase that can remove conjugated ubiquitin from target proteins, such as RAB7A and LAMTOR1. Acts as a positive regulator of the mTORC1 signaling by mediating deubiquitination of LAMTOR1, thereby promoting the association between LAMTOR1 and the lysosomal V-ATPase complex and subsequent activation of the mTORC1 complex. The polypeptide is Ubiquitin carboxyl-terminal hydrolase 32 (Mus musculus (Mouse)).